The primary structure comprises 442 residues: MENAKMNSLIAQYPLVEDLVALKETTWFNPGTTSLAEGLPYVGLTEQDVQDAHARLSRFAPYLAKAFPETAAAGGIIESELVAIPAMQKRLEKEYQQPISGQLLLKKDSHLPISGSIKARGGIYEVLAHAEKLALEAGLLTLEDDYSKLLSPEFKQFFSQYSIAVGSTGNLGLSIGIMSARIGFKVTVHMSADARAWKKAKLRSHGVTVVEYEQDYGVAVEEGRKAAQSDPNCFFIDDENSRTLFLGYSVAGQRLKAQFAQQGRIVDADNPLFVYLPCGVGGGPGGVAFGLKLAFGDHVHCFFAEPTHSPCMLLGVHTGLHDQISVQDIGIDNLTAADGLAVGRASGFVGRAMERLLDGFYTLSDQTMYDMLGWLAQEEGIRLEPSALAGMAGPQRVCASVSYQQLHGFSAEQLRNATHLVWATGGGMVPEEEMNQYLAKGR.

N6-(pyridoxal phosphate)lysine is present on Lys118.

The protein belongs to the serine/threonine dehydratase family. DsdA subfamily. As to quaternary structure, monomer. Pyridoxal 5'-phosphate serves as cofactor.

The catalysed reaction is D-serine = pyruvate + NH4(+). The polypeptide is D-serine dehydratase (Escherichia coli O81 (strain ED1a)).